The sequence spans 158 residues: Transcription elongation factor GreA (158 aa).

Belongs to the GreA/GreB family.

Functionally, necessary for efficient RNA polymerase transcription elongation past template-encoded arresting sites. The arresting sites in DNA have the property of trapping a certain fraction of elongating RNA polymerases that pass through, resulting in locked ternary complexes. Cleavage of the nascent transcript by cleavage factors such as GreA or GreB allows the resumption of elongation from the new 3'terminus. GreA releases sequences of 2 to 3 nucleotides. In Zymomonas mobilis subsp. mobilis (strain ATCC 31821 / ZM4 / CP4), this protein is Transcription elongation factor GreA.